Consider the following 106-residue polypeptide: MKQDIYIRIKAFDCSLLEKCIREFIDQLKQFNADLSGPIALPRKDSKFTVNRSPHVDKKSREQFEMRISKRLIIVHNPTSTMMKMLADLSFSAGVEVDLKVKEVNI.

The protein belongs to the universal ribosomal protein uS10 family. In terms of assembly, part of the 30S ribosomal subunit.

In terms of biological role, involved in the binding of tRNA to the ribosomes. In Wolbachia pipientis subsp. Culex pipiens (strain wPip), this protein is Small ribosomal subunit protein uS10.